Consider the following 115-residue polypeptide: V-type proton ATPase subunit G (115 aa).

It belongs to the V-ATPase G subunit family. In terms of assembly, V-ATPase is a heteromultimeric enzyme composed of a peripheral catalytic V1 complex (components A to H) attached to an integral membrane V0 proton pore complex (components: a, c, c', c'', d, e, f and VOA1).

The protein localises to the vacuole membrane. Its function is as follows. Subunit of the V1 complex of vacuolar(H+)-ATPase (V-ATPase), a multisubunit enzyme composed of a peripheral complex (V1) that hydrolyzes ATP and a membrane integral complex (V0) that translocates protons. V-ATPase is responsible for acidifying and maintaining the pH of intracellular compartments. This Neurospora crassa (strain ATCC 24698 / 74-OR23-1A / CBS 708.71 / DSM 1257 / FGSC 987) protein is V-type proton ATPase subunit G (vma-10).